Consider the following 618-residue polypeptide: Serine--tRNA ligase, cytoplasmic (618 aa).

417–419 contributes to the L-serine binding site; the sequence is TSE. Residue 448–450 coordinates ATP; sequence RTE. Position 472 (Glu472) interacts with L-serine. Position 536 to 539 (536 to 539) interacts with ATP; that stretch reads EVSS. L-serine is bound at residue Ser570.

This sequence belongs to the class-II aminoacyl-tRNA synthetase family. Type-1 seryl-tRNA synthetase subfamily. As to quaternary structure, homodimer. The tRNA molecule binds across the dimer.

The protein resides in the cytoplasm. The enzyme catalyses tRNA(Ser) + L-serine + ATP = L-seryl-tRNA(Ser) + AMP + diphosphate + H(+). The catalysed reaction is tRNA(Sec) + L-serine + ATP = L-seryl-tRNA(Sec) + AMP + diphosphate + H(+). Its pathway is aminoacyl-tRNA biosynthesis; selenocysteinyl-tRNA(Sec) biosynthesis; L-seryl-tRNA(Sec) from L-serine and tRNA(Sec): step 1/1. Functionally, catalyzes the attachment of serine to tRNA(Ser). Is also able to aminoacylate tRNA(Sec) with serine, to form the misacylated tRNA L-seryl-tRNA(Sec), which will be further converted into selenocysteinyl-tRNA(Sec). The sequence is that of Serine--tRNA ligase, cytoplasmic from Plasmodium falciparum (isolate 3D7).